The primary structure comprises 202 residues: Orotate phosphoribosyltransferase (202 aa).

Residues Arg94, Lys98, His100, and 120-128 (EDLISTGGS) each bind 5-phospho-alpha-D-ribose 1-diphosphate. Ser124 serves as a coordination point for orotate.

The protein belongs to the purine/pyrimidine phosphoribosyltransferase family. PyrE subfamily. As to quaternary structure, homodimer. Mg(2+) is required as a cofactor.

It carries out the reaction orotidine 5'-phosphate + diphosphate = orotate + 5-phospho-alpha-D-ribose 1-diphosphate. The protein operates within pyrimidine metabolism; UMP biosynthesis via de novo pathway; UMP from orotate: step 1/2. Its function is as follows. Catalyzes the transfer of a ribosyl phosphate group from 5-phosphoribose 1-diphosphate to orotate, leading to the formation of orotidine monophosphate (OMP). This is Orotate phosphoribosyltransferase from Oceanobacillus iheyensis (strain DSM 14371 / CIP 107618 / JCM 11309 / KCTC 3954 / HTE831).